The sequence spans 458 residues: Argininosuccinate lyase (458 aa).

Belongs to the lyase 1 family. Argininosuccinate lyase subfamily.

It localises to the cytoplasm. The enzyme catalyses 2-(N(omega)-L-arginino)succinate = fumarate + L-arginine. It functions in the pathway amino-acid biosynthesis; L-arginine biosynthesis; L-arginine from L-ornithine and carbamoyl phosphate: step 3/3. In Salmonella typhimurium (strain LT2 / SGSC1412 / ATCC 700720), this protein is Argininosuccinate lyase.